A 463-amino-acid polypeptide reads, in one-letter code: Glutathione amide reductase (463 aa).

Residues threonine 2, glutamine 3, and histidine 4 each contribute to the Ni(2+) site. FAD-binding positions include serine 14–glycine 15, glutamate 34, and threonine 41. Cysteine 42 and cysteine 47 are disulfide-bonded. FAD contacts are provided by residues lysine 50 and histidine 113–alanine 114. Residue lysine 50 coordinates NAD(+). Residues alanine 174 to glutamate 180, leucine 197 to glutamate 198, valine 230, and glycine 261 each bind NAD(+). Residues aspartate 302 and glutamine 308 to threonine 310 contribute to the FAD site. The NAD(+) site is built by glutamine 308 and valine 341. Histidine 437 serves as a coordination point for FAD. The active-site Proton acceptor is the histidine 437.

It belongs to the class-I pyridine nucleotide-disulfide oxidoreductase family. Homodimer. Requires FAD as cofactor.

The catalysed reaction is 2 glutathione amide + NAD(+) = glutathione amide disulfide + NADH + H(+). In terms of biological role, catalyzes the reduction of glutathione amide disulfide (GASSAG) to restore glutathione amide (GASH) in the presence of NADH. May play a role in GASH metabolism under anaerobic conditions as a sulfide carrier necessary for cytoplasmic sulfide oxidation. The sequence is that of Glutathione amide reductase from Marichromatium gracile (Chromatium gracile).